Reading from the N-terminus, the 243-residue chain is Large ribosomal subunit protein uL3 (243 aa).

2 disordered regions span residues valine 139–glycine 164 and lysine 218–alanine 243. Glutamine 151 bears the N5-methylglutamine mark. Residues lysine 218–aspartate 229 show a composition bias toward basic and acidic residues. Residues lysine 230 to alanine 243 show a composition bias toward low complexity.

It belongs to the universal ribosomal protein uL3 family. As to quaternary structure, part of the 50S ribosomal subunit. Forms a cluster with proteins L14 and L19. In terms of processing, methylated by PrmB.

One of the primary rRNA binding proteins, it binds directly near the 3'-end of the 23S rRNA, where it nucleates assembly of the 50S subunit. The chain is Large ribosomal subunit protein uL3 from Afipia carboxidovorans (strain ATCC 49405 / DSM 1227 / KCTC 32145 / OM5) (Oligotropha carboxidovorans).